The following is a 475-amino-acid chain: Tryptophan synthase beta chain 2, chloroplastic (475 aa).

A compositionally biased stretch (polar residues) spans 1 to 21 (MATASTAATFRPSSVSASSEL). Residues 1-44 (MATASTAATFRPSSVSASSELTHLRSPSKLPKFTPLPSARSRSS) are disordered. The N-terminal 51 residues, 1–51 (MATASTAATFRPSSVSASSELTHLRSPSKLPKFTPLPSARSRSSSSFSVSC), are a transit peptide targeting the chloroplast. Thr-52 is subject to N-acetylthreonine. Lys-170 is subject to N6-(pyridoxal phosphate)lysine.

The protein belongs to the TrpB family. As to quaternary structure, tetramer of two alpha and two beta chains. Pyridoxal 5'-phosphate is required as a cofactor.

Its subcellular location is the plastid. It is found in the chloroplast. It carries out the reaction (1S,2R)-1-C-(indol-3-yl)glycerol 3-phosphate + L-serine = D-glyceraldehyde 3-phosphate + L-tryptophan + H2O. Its pathway is amino-acid biosynthesis; L-tryptophan biosynthesis; L-tryptophan from chorismate: step 5/5. Its function is as follows. The beta subunit is responsible for the synthesis of L-tryptophan from indole and L-serine. The sequence is that of Tryptophan synthase beta chain 2, chloroplastic (TSB2) from Arabidopsis thaliana (Mouse-ear cress).